Consider the following 201-residue polypeptide: UPF0301 protein RHA1_ro03630 (201 aa).

It belongs to the UPF0301 (AlgH) family.

The sequence is that of UPF0301 protein RHA1_ro03630 from Rhodococcus jostii (strain RHA1).